A 607-amino-acid chain; its full sequence is Probable CoA ligase CCL8 (607 aa).

Residues 236–244 (TSGTTGKPK), 391–396 (ERYGMT), Asp474, 486–489 (ILGR), and Lys591 each bind ATP. The interval 305-391 (SVRGIWQRWR…QTITGHRLLE (87 aa)) is SBD1. The SBD2 stretch occupies residues 392 to 453 (RYGMTEFVMA…VRSPSLFKEY (62 aa)).

Belongs to the ATP-dependent AMP-binding enzyme family. In terms of tissue distribution, mostly expressed at low levels in glandular trichomes (lupulin glands) after flowering, and, to a lower extent, in stems, leaves, flowers and cones.

Its subcellular location is the cytoplasm. The protein localises to the cytosol. This Humulus lupulus (European hop) protein is Probable CoA ligase CCL8.